The chain runs to 785 residues: Solute carrier family 45 member 4 (785 aa).

The disordered stretch occupies residues 1 to 43 (MKMAPQNADSESMQVQELPVPLPDPQKPRDPEAETQEETTSEG). 6 consecutive transmembrane segments (helical) span residues 64–84 (EFCY…IGLP), 87–107 (YYSL…PLIG), 124–144 (ILAL…GSAI), 156–176 (PIGI…ADAT), 197–217 (LNIH…LGGL), and 234–254 (VLFF…LFSI). Disordered stretches follow at residues 259–309 (YSPQ…VQSE) and 401–430 (KVPN…SGSM). 2 positions are modified to phosphoserine: Ser442 and Ser472. Residues 478 to 505 (DLQQRQRSRHRNQSGATASSGDTESEEG) are disordered. Over residues 490–499 (QSGATASSGD) the composition is skewed to low complexity. Phosphoserine is present on Ser502. The next 6 helical transmembrane spans lie at 525–545 (LMWL…EAVF), 577–597 (MGCW…ALLQ), 609–629 (IIYM…AMFP), 631–651 (VYVA…ISYC), 683–703 (ILSC…GGVV), and 709–729 (IVVI…TATF). Residues 741-772 (KEEQKGLSSGPAGEGEGGAGSEKPTVLKLSRK) form a disordered region. The residue at position 749 (Ser749) is a Phosphoserine.

This sequence belongs to the glycoside-pentoside-hexuronide (GPH) cation symporter transporter (TC 2.A.2) family. Ubiquitously expressed.

The protein localises to the membrane. The catalysed reaction is sucrose(out) + H(+)(out) = sucrose(in) + H(+)(in). Its function is as follows. Proton-associated sucrose transporter. May be able to transport also glucose and fructose. The sequence is that of Solute carrier family 45 member 4 (Slc45a4) from Mus musculus (Mouse).